The primary structure comprises 198 residues: NADH-quinone oxidoreductase subunit C (198 aa).

It belongs to the complex I 30 kDa subunit family. In terms of assembly, NDH-1 is composed of 14 different subunits. Subunits NuoB, C, D, E, F, and G constitute the peripheral sector of the complex.

The protein localises to the cell inner membrane. It carries out the reaction a quinone + NADH + 5 H(+)(in) = a quinol + NAD(+) + 4 H(+)(out). Its function is as follows. NDH-1 shuttles electrons from NADH, via FMN and iron-sulfur (Fe-S) centers, to quinones in the respiratory chain. The immediate electron acceptor for the enzyme in this species is believed to be ubiquinone. Couples the redox reaction to proton translocation (for every two electrons transferred, four hydrogen ions are translocated across the cytoplasmic membrane), and thus conserves the redox energy in a proton gradient. In Herminiimonas arsenicoxydans, this protein is NADH-quinone oxidoreductase subunit C.